A 212-amino-acid polypeptide reads, in one-letter code: Proteasome subunit beta 2 (212 aa).

Residues 1–15 (MLHHPGTGQLRALKG) constitute a propeptide, removed in mature form; by autocatalysis. Thr16 (nucleophile) is an active-site residue.

It belongs to the peptidase T1B family. The 20S proteasome core is composed of 14 alpha and 14 beta subunits that assemble into four stacked heptameric rings, resulting in a barrel-shaped structure. The two inner rings, each composed of seven catalytic beta subunits, are sandwiched by two outer rings, each composed of seven alpha subunits. The catalytic chamber with the active sites is on the inside of the barrel. Has a gated structure, the ends of the cylinder being occluded by the N-termini of the alpha-subunits. Is capped at one or both ends by the proteasome regulatory ATPase, PAN.

It is found in the cytoplasm. The catalysed reaction is Cleavage of peptide bonds with very broad specificity.. The formation of the proteasomal ATPase PAN-20S proteasome complex, via the docking of the C-termini of PAN into the intersubunit pockets in the alpha-rings, triggers opening of the gate for substrate entry. Interconversion between the open-gate and close-gate conformations leads to a dynamic regulation of the 20S proteasome proteolysis activity. Functionally, component of the proteasome core, a large protease complex with broad specificity involved in protein degradation. This is Proteasome subunit beta 2 from Hyperthermus butylicus (strain DSM 5456 / JCM 9403 / PLM1-5).